We begin with the raw amino-acid sequence, 330 residues long: Phenylalanine--tRNA ligase alpha subunit (330 aa).

E257 serves as a coordination point for Mg(2+).

This sequence belongs to the class-II aminoacyl-tRNA synthetase family. Phe-tRNA synthetase alpha subunit type 1 subfamily. In terms of assembly, tetramer of two alpha and two beta subunits. It depends on Mg(2+) as a cofactor.

The protein resides in the cytoplasm. The catalysed reaction is tRNA(Phe) + L-phenylalanine + ATP = L-phenylalanyl-tRNA(Phe) + AMP + diphosphate + H(+). This is Phenylalanine--tRNA ligase alpha subunit from Nostoc sp. (strain PCC 7120 / SAG 25.82 / UTEX 2576).